Reading from the N-terminus, the 492-residue chain is Protein nucleotidyltransferase YdiU (492 aa).

The ATP site is built by Gly101, Gly103, Arg104, Lys124, Asp136, Gly137, Arg187, and Arg194. Asp268 serves as the catalytic Proton acceptor. Asn269 and Asp278 together coordinate Mg(2+). Position 278 (Asp278) interacts with ATP.

The protein belongs to the SELO family. Requires Mg(2+) as cofactor. The cofactor is Mn(2+).

It catalyses the reaction L-seryl-[protein] + ATP = 3-O-(5'-adenylyl)-L-seryl-[protein] + diphosphate. The catalysed reaction is L-threonyl-[protein] + ATP = 3-O-(5'-adenylyl)-L-threonyl-[protein] + diphosphate. The enzyme catalyses L-tyrosyl-[protein] + ATP = O-(5'-adenylyl)-L-tyrosyl-[protein] + diphosphate. It carries out the reaction L-histidyl-[protein] + UTP = N(tele)-(5'-uridylyl)-L-histidyl-[protein] + diphosphate. It catalyses the reaction L-seryl-[protein] + UTP = O-(5'-uridylyl)-L-seryl-[protein] + diphosphate. The catalysed reaction is L-tyrosyl-[protein] + UTP = O-(5'-uridylyl)-L-tyrosyl-[protein] + diphosphate. Functionally, nucleotidyltransferase involved in the post-translational modification of proteins. It can catalyze the addition of adenosine monophosphate (AMP) or uridine monophosphate (UMP) to a protein, resulting in modifications known as AMPylation and UMPylation. This Corynebacterium efficiens (strain DSM 44549 / YS-314 / AJ 12310 / JCM 11189 / NBRC 100395) protein is Protein nucleotidyltransferase YdiU.